Reading from the N-terminus, the 167-residue chain is Putative 4-hydroxy-4-methyl-2-oxoglutarate aldolase (167 aa).

Residues 81–84 (GDII) and arginine 103 contribute to the substrate site. A divalent metal cation is bound at residue aspartate 104.

The protein belongs to the class II aldolase/RraA-like family. Homotrimer. A divalent metal cation is required as a cofactor.

It catalyses the reaction 4-hydroxy-4-methyl-2-oxoglutarate = 2 pyruvate. The enzyme catalyses oxaloacetate + H(+) = pyruvate + CO2. Catalyzes the aldol cleavage of 4-hydroxy-4-methyl-2-oxoglutarate (HMG) into 2 molecules of pyruvate. Also contains a secondary oxaloacetate (OAA) decarboxylase activity due to the common pyruvate enolate transition state formed following C-C bond cleavage in the retro-aldol and decarboxylation reactions. In Corynebacterium jeikeium (strain K411), this protein is Putative 4-hydroxy-4-methyl-2-oxoglutarate aldolase.